The chain runs to 165 residues: Ribosome maturation factor RimM (165 aa).

The PRC barrel domain occupies 90 to 161 (EDEYFIVDLV…LITIRPSGEW (72 aa)).

The protein belongs to the RimM family. Binds ribosomal protein uS19.

The protein resides in the cytoplasm. In terms of biological role, an accessory protein needed during the final step in the assembly of 30S ribosomal subunit, possibly for assembly of the head region. Essential for efficient processing of 16S rRNA. May be needed both before and after RbfA during the maturation of 16S rRNA. It has affinity for free ribosomal 30S subunits but not for 70S ribosomes. The protein is Ribosome maturation factor RimM of Clostridium perfringens (strain SM101 / Type A).